A 195-amino-acid polypeptide reads, in one-letter code: Molybdenum cofactor guanylyltransferase (195 aa).

GTP is bound by residues 12–14 (LAG), K25, N53, D70, and D100. Residue D100 coordinates Mg(2+).

The protein belongs to the MobA family. As to quaternary structure, monomer. It depends on Mg(2+) as a cofactor.

The protein localises to the cytoplasm. It catalyses the reaction Mo-molybdopterin + GTP + H(+) = Mo-molybdopterin guanine dinucleotide + diphosphate. Functionally, transfers a GMP moiety from GTP to Mo-molybdopterin (Mo-MPT) cofactor (Moco or molybdenum cofactor) to form Mo-molybdopterin guanine dinucleotide (Mo-MGD) cofactor. The chain is Molybdenum cofactor guanylyltransferase from Vibrio vulnificus (strain YJ016).